The following is a 90-amino-acid chain: Secretory calcium-binding phosphoprotein proline-glutamine-rich 1 (90 aa).

Positions 1–15 are cleaved as a signal peptide; the sequence is MQLFLLAALLSAAAA.

As to expression, expressed in enamel organ.

It is found in the secreted. Tooth-associated epithelia protein that may participate in structuring the basal lamina at cell-tooth interface. The polypeptide is Secretory calcium-binding phosphoprotein proline-glutamine-rich 1 (Mus musculus (Mouse)).